A 367-amino-acid chain; its full sequence is DNA replication and repair protein RecF (367 aa).

30-37 contributes to the ATP binding site; it reads GANGSGKT.

It belongs to the RecF family.

It localises to the cytoplasm. Functionally, the RecF protein is involved in DNA metabolism; it is required for DNA replication and normal SOS inducibility. RecF binds preferentially to single-stranded, linear DNA. It also seems to bind ATP. The sequence is that of DNA replication and repair protein RecF from Pseudomonas entomophila (strain L48).